The chain runs to 146 residues: MKLHELKPAEGSRKVRNRVGRGTSSGNGKTSGRGQKGQKARSGGGVRLGFEGGQTPLFRRMPKRGFSNINAKEYALVNLDQLNVFEDGTEVTPVVLKEAGIVRAEKSGVKILGNGELTKKLSVKAAKFSKSAEAAITAKGGSIEVI.

Basic and acidic residues predominate over residues 1-13 (MKLHELKPAEGSR). A disordered region spans residues 1–59 (MKLHELKPAEGSRKVRNRVGRGTSSGNGKTSGRGQKGQKARSGGGVRLGFEGGQTPLFR). Composition is skewed to gly residues over residues 23 to 35 (TSSG…GRGQ) and 42 to 52 (SGGGVRLGFEG).

Belongs to the universal ribosomal protein uL15 family. In terms of assembly, part of the 50S ribosomal subunit.

In terms of biological role, binds to the 23S rRNA. This chain is Large ribosomal subunit protein uL15, found in Streptococcus agalactiae serotype Ia (strain ATCC 27591 / A909 / CDC SS700).